A 124-amino-acid polypeptide reads, in one-letter code: V-type proton ATPase subunit F 1 (124 aa).

At S87 the chain carries Phosphoserine.

This sequence belongs to the V-ATPase F subunit family. As to quaternary structure, V-ATPase is a heteromultimeric enzyme made up of two complexes: the ATP-hydrolytic V1 complex and the proton translocation V0 complex. The V1 complex consists of three catalytic AB heterodimers that form a heterohexamer, three peripheral stalks each consisting of EG heterodimers, one central rotor including subunits D and F, and the regulatory subunits C and H. The proton translocation complex V0 consists of the proton transport subunit a, a ring of proteolipid subunits c9c'', rotary subunit d, subunits e and f, and the accessory subunits VhaAC45 and ATP6AP2.

In terms of biological role, subunit of the V1 complex of vacuolar(H+)-ATPase (V-ATPase), a multisubunit enzyme composed of a peripheral complex (V1) that hydrolyzes ATP and a membrane integral complex (V0) that translocates protons. V-ATPase is responsible for acidifying and maintaining the pH of intracellular compartments and in some cell types, is targeted to the plasma membrane, where it is responsible for acidifying the extracellular environment. The chain is V-type proton ATPase subunit F 1 (Vha14-1) from Drosophila melanogaster (Fruit fly).